The following is a 312-amino-acid chain: Olfactory receptor 8G50 (312 aa).

The Extracellular segment spans residues 1–28; the sequence is MAYSNQSRVTEFIISGLTNKPELQLPLF. Residue asparagine 5 is glycosylated (N-linked (GlcNAc...) asparagine). The helical transmembrane segment at 29–49 threads the bilayer; it reads LLFLGIYLFTVLGNLGMIILI. The Cytoplasmic portion of the chain corresponds to 50-56; the sequence is LLSSHLH. Residues 57–77 form a helical membrane-spanning segment; that stretch reads TPMYFFLSSLSFIDLCYSTII. Over 78-99 the chain is Extracellular; it reads TPKMLVNFVTTKNVISYQECMT. Cysteine 97 and cysteine 189 are oxidised to a cystine. Residues 100-120 traverse the membrane as a helical segment; that stretch reads QLYFFIAFVISECHMLAAMAY. Residues 121 to 143 lie on the Cytoplasmic side of the membrane; that stretch reads DRYVAICNPLLYNVTMSYQVCSW. A helical membrane pass occupies residues 144–164; sequence MVGGVYGMGFIGAAIHTFCML. The Extracellular portion of the chain corresponds to 165 to 204; it reads RVVFCKDNIINHYFCDLFPLMELACSSTYVNEVVLLSLSA. A helical transmembrane segment spans residues 205-225; that stretch reads FNIFIPTLTILGSYIFIIISI. The Cytoplasmic portion of the chain corresponds to 226–244; the sequence is LRIKSTEGRFKAFSTCSSH. A helical membrane pass occupies residues 245–265; sequence FSAVSVFFGSLAFMYLQPFSV. The Extracellular portion of the chain corresponds to 266 to 274; sequence SSKDKGKVS. The chain crosses the membrane as a helical span at residues 275-292; that stretch reads SVFYTTIVPMLNPMIYSL. The Cytoplasmic segment spans residues 293–312; that stretch reads RNRDVKLALNKLFQKKKFHV.

The protein belongs to the G-protein coupled receptor 1 family.

Its subcellular location is the cell membrane. Its function is as follows. Odorant receptor. This chain is Olfactory receptor 8G50, found in Mus musculus (Mouse).